Reading from the N-terminus, the 244-residue chain is Aspartate/glutamate leucyltransferase (244 aa).

Belongs to the R-transferase family. Bpt subfamily.

The protein localises to the cytoplasm. It carries out the reaction N-terminal L-glutamyl-[protein] + L-leucyl-tRNA(Leu) = N-terminal L-leucyl-L-glutamyl-[protein] + tRNA(Leu) + H(+). It catalyses the reaction N-terminal L-aspartyl-[protein] + L-leucyl-tRNA(Leu) = N-terminal L-leucyl-L-aspartyl-[protein] + tRNA(Leu) + H(+). Functions in the N-end rule pathway of protein degradation where it conjugates Leu from its aminoacyl-tRNA to the N-termini of proteins containing an N-terminal aspartate or glutamate. The chain is Aspartate/glutamate leucyltransferase from Bordetella bronchiseptica (strain ATCC BAA-588 / NCTC 13252 / RB50) (Alcaligenes bronchisepticus).